The following is a 628-amino-acid chain: LRR receptor kinase SERK2 (628 aa).

The first 31 residues, 1–31, serve as a signal peptide directing secretion; it reads MAEARLLRRRRLCLAVPFVWVVAVAVSRVGA. LRR repeat units lie at residues 97-121, 123-144, 145-169, and 170-194; these read LKNL…LGNL, NLVS…TLGQ, LYKL…LTNI, and TTLQ…SFSL. N-linked (GlcNAc...) asparagine glycosylation is found at Asn109, Asn120, Asn133, Asn155, Asn168, and Asn181. The chain crosses the membrane as a helical span at residues 243-263; that stretch reads AIAGGVAAAAALLFAVPAIGF. Thr303 is subject to Phosphothreonine. Residues 306–593 form the Protein kinase domain; that stretch reads FSNKNILGRG…GLAERWEEWQ (288 aa). Residue 312–320 participates in ATP binding; the sequence is LGRGGFGKV. At Ser329 the chain carries Phosphoserine. Lys334 lines the ATP pocket. Thr350 bears the Phosphothreonine mark. Phosphoserine occurs at positions 356 and 387. The active-site Proton acceptor is Asp433. Residues Thr463, Thr466, and Thr472 each carry the phosphothreonine modification. The residue at position 615 (Ser615) is a Phosphoserine. Phosphothreonine is present on Thr616. At Ser625 the chain carries Phosphoserine.

It belongs to the protein kinase superfamily. Ser/Thr protein kinase family. In terms of assembly, interacts with BRI1. Interacts with XA21, XA26/XA3 and FLS2. In terms of processing, autophosphorylated on serine and threonine residues. In terms of tissue distribution, expressed in flag leaves. Expressed in roots, shoot apex, leaf blades, leaf sheaths, panicles and flowers. Expressed leaves, stems, sheaths and flowers.

The protein resides in the cell membrane. The enzyme catalyses L-seryl-[protein] + ATP = O-phospho-L-seryl-[protein] + ADP + H(+). It carries out the reaction L-threonyl-[protein] + ATP = O-phospho-L-threonyl-[protein] + ADP + H(+). LRR receptor kinase involved in positive regulation of somatic embryogenesis and defense response against the rice blast fungus pathogen Magnaporthe oryzae. Involved in the positive regulation of receptor kinase-mediated immunity. Required for immunity mediated by the LRR receptor kinases XA21 and XA26/XA3 which recognize effectors from the bacterial pathogen Xanthomonas oryzae pv. oryzae (Xoo). Required for the immune response mediated by the LRR receptor kinase FLS2 which recognizes specifically the bacterial flagellin (flg22) effector. Kinase activity and direct interaction with the immune receptors is critical for their function. Involved in the regulation of plant growth through the brassinosteroid (BR) signaling pathway. This is LRR receptor kinase SERK2 from Oryza sativa subsp. japonica (Rice).